Reading from the N-terminus, the 138-residue chain is ATP synthase subunit g, mitochondrial (138 aa).

It belongs to the ATPase g subunit family. F-type ATP synthases have 2 components, the catalytic core F(1) and the membrane-embedded component F(0), linked together by a central stalk and a peripheral stalk. The central stalk, also called rotor shaft, is often seen as part of F(1). The peripheral stalk is seen as part of F(0). F(0) contains the membrane channel next to the rotor. F-type ATP synthases form dimers but each monomer functions independently in ATP generation. The dimer consists of 17 different polypeptides: ATP1 (subunit alpha, 3 molecules per monomer, part of F(1)), ATP2 (subunit beta, 3 copies per monomer, part of F(1)), ATP3 (subunit gamma, part of the central stalk), ATP4 (subunit b, part of the peripheral stalk), ATP5/OSCP (subunit 5/OSCP, part of the peripheral stalk), ATP6 (subunit a, part of the peripheral stalk), ATP7 (subunit d, part of the peripheral stalk), ATP8 (subunit 8, part of the peripheral stalk), OLI1 (subunit c, part of the rotor, 10 molecules per monomer), ATP14 (subunit h, part of the peripheral stalk), ATP15 (subunit epsilon, part of the central stalk), ATP16 (subunit delta, part of the central stalk), ATP17 (subunit f, part of the peripheral stalk), ATP18 (subunit i/j, part of the peripheral stalk), ATP19 (subunit k, dimer-specific, at interface between monomers), ATP20 (subunit g, at interface between monomers), TIM11 (subunit e, at interface between monomers).

The protein resides in the mitochondrion inner membrane. Functionally, mitochondrial membrane ATP synthase (F(1)F(0) ATP synthase or Complex V) produces ATP from ADP in the presence of a proton gradient across the membrane which is generated by electron transport complexes of the respiratory chain. F-type ATP synthases consist of two structural domains, F(1) - containing the extramembraneous catalytic core, and F(0) - containing the membrane proton channel, linked together by a central stalk and a peripheral stalk. During catalysis, ATP synthesis in the catalytic domain of F(1) is coupled via a rotary mechanism of the central stalk subunits to proton translocation. Part of the complex F(0) domain. Minor subunit located with subunit a/ATP6 in the membrane. Together with subunit e/TIM11, probably contributes to membrane curvature at the site of the ATP synthase dimer, ultimately contributing to formation of cristae. This is ATP synthase subunit g, mitochondrial from Yarrowia lipolytica (strain CLIB 122 / E 150) (Yeast).